The primary structure comprises 426 residues: Phosphomethylpyrimidine synthase (426 aa).

Substrate contacts are provided by residues asparagine 65, methionine 94, tyrosine 123, histidine 162, 184-186 (SRG), 225-228 (DGMR), and glutamate 264. Position 268 (histidine 268) interacts with Zn(2+). A substrate-binding site is contributed by tyrosine 291. Zn(2+) is bound at residue histidine 332. Residues cysteine 408, cysteine 411, and cysteine 415 each coordinate [4Fe-4S] cluster.

It belongs to the ThiC family. Requires [4Fe-4S] cluster as cofactor.

The enzyme catalyses 5-amino-1-(5-phospho-beta-D-ribosyl)imidazole + S-adenosyl-L-methionine = 4-amino-2-methyl-5-(phosphooxymethyl)pyrimidine + CO + 5'-deoxyadenosine + formate + L-methionine + 3 H(+). It functions in the pathway cofactor biosynthesis; thiamine diphosphate biosynthesis. In terms of biological role, catalyzes the synthesis of the hydroxymethylpyrimidine phosphate (HMP-P) moiety of thiamine from aminoimidazole ribotide (AIR) in a radical S-adenosyl-L-methionine (SAM)-dependent reaction. In Methanococcus vannielii (strain ATCC 35089 / DSM 1224 / JCM 13029 / OCM 148 / SB), this protein is Phosphomethylpyrimidine synthase.